A 346-amino-acid chain; its full sequence is E3 ubiquitin-protein ligase ARK2C (346 aa).

Disordered stretches follow at residues 23 to 76 (PFQR…QHSG) and 267 to 288 (PHKYKKRRPQDGKGKKDEGEES). The segment at 266–268 (FPH) is ubiquitin binding. Residues 275–284 (PQDGKGKKDE) are compositionally biased toward basic and acidic residues. Residues cysteine 294 and cysteine 297 each contribute to the Zn(2+) site. An RING-type; atypical zinc finger spans residues 294–335 (CTICLSMLEDGEDVRRLPCMHLFHQLCVDQWLAMSKKCPICR). The segment at 309 to 313 (RLPCM) is ubiquitin binding. Zn(2+)-binding residues include histidine 317 and cysteine 320.

It belongs to the Arkadia family. As to quaternary structure, monomer; binding to the ubiquitin-conjugating enzyme E2 does not trigger homodimerization.

It localises to the nucleus. It carries out the reaction S-ubiquitinyl-[E2 ubiquitin-conjugating enzyme]-L-cysteine + [acceptor protein]-L-lysine = [E2 ubiquitin-conjugating enzyme]-L-cysteine + N(6)-ubiquitinyl-[acceptor protein]-L-lysine.. With respect to regulation, binds free ubiquitin non-covalently via its RING-type zinc finger. Ubiquitin-binding leads to enhance the E3 ubiquitin-protein ligase activity by stabilizing the ubiquitin-conjugating enzyme E2 (donor ubiquitin) in the 'closed' conformation and activating ubiquitin transfer. Functionally, E3 ubiquitin-protein ligase that acts as a regulator of motor axon elongation. Required for efficient motor axon extension in the dorsal forelimb by enhancing the transcriptional responses of the SMAD1/SMAD5/SMAD8 effectors, which are activated downstream of BMP. Acts by mediating ubiquitination and degradation of SMAD inhibitors such as SMAD6, SMAD7, SKI and SNON isoform of SKIL. This Homo sapiens (Human) protein is E3 ubiquitin-protein ligase ARK2C.